The following is a 356-amino-acid chain: Protein MGF 360-10L (356 aa).

The ANK repeat unit spans residues 57–89 (DLNTALMLATKENNYQLIKMFTDWGADINYGLI). N-linked (GlcNAc...) asparagine; by host glycosylation is present at Asn172. The helical transmembrane segment at 249-271 (NFLTIYYCFILGANINLAMIASI) threads the bilayer. 2 N-linked (GlcNAc...) asparagine; by host glycosylation sites follow: Asn352 and Asn353.

Belongs to the asfivirus MGF 360 family.

The protein resides in the host membrane. Plays a role in virus cell tropism, and may be required for efficient virus replication in macrophages. This chain is Protein MGF 360-10L, found in African swine fever virus (isolate Tick/South Africa/Pretoriuskop Pr4/1996) (ASFV).